A 364-amino-acid chain; its full sequence is UDP-N-acetylglucosamine--N-acetylmuramyl-(pentapeptide) pyrophosphoryl-undecaprenol N-acetylglucosamine transferase 1 (364 aa).

UDP-N-acetyl-alpha-D-glucosamine contacts are provided by residues 10–12, Asn-124, Ser-195, Ile-250, and Gln-295; that span reads TGG.

The protein belongs to the glycosyltransferase 28 family. MurG subfamily.

The protein localises to the cell membrane. It catalyses the reaction di-trans,octa-cis-undecaprenyl diphospho-N-acetyl-alpha-D-muramoyl-L-alanyl-D-glutamyl-meso-2,6-diaminopimeloyl-D-alanyl-D-alanine + UDP-N-acetyl-alpha-D-glucosamine = di-trans,octa-cis-undecaprenyl diphospho-[N-acetyl-alpha-D-glucosaminyl-(1-&gt;4)]-N-acetyl-alpha-D-muramoyl-L-alanyl-D-glutamyl-meso-2,6-diaminopimeloyl-D-alanyl-D-alanine + UDP + H(+). Its pathway is cell wall biogenesis; peptidoglycan biosynthesis. Functionally, cell wall formation. Catalyzes the transfer of a GlcNAc subunit on undecaprenyl-pyrophosphoryl-MurNAc-pentapeptide (lipid intermediate I) to form undecaprenyl-pyrophosphoryl-MurNAc-(pentapeptide)GlcNAc (lipid intermediate II). The protein is UDP-N-acetylglucosamine--N-acetylmuramyl-(pentapeptide) pyrophosphoryl-undecaprenol N-acetylglucosamine transferase 1 of Bacillus thuringiensis subsp. konkukian (strain 97-27).